A 783-amino-acid polypeptide reads, in one-letter code: Putative ATP-dependent DNA helicase fml2 (783 aa).

Residues 118 to 286 (FCEQALFHNL…KVVDCLHISK (169 aa)) enclose the Helicase ATP-binding domain. ATP is bound at residue 131–138 (LPTGLGKT). The DEAH box motif lies at 234-237 (DEAH). The 170-residue stretch at 450 to 619 (KMNHLLELLK…GKKIALKKDV (170 aa)) folds into the Helicase C-terminal domain.

Belongs to the DEAD box helicase family. DEAH subfamily. FANCM sub-subfamily.

The protein localises to the nucleus. It is found in the nucleolus. The catalysed reaction is ATP + H2O = ADP + phosphate + H(+). The polypeptide is Putative ATP-dependent DNA helicase fml2 (Schizosaccharomyces pombe (strain 972 / ATCC 24843) (Fission yeast)).